The following is a 153-amino-acid chain: 3-hydroxyacyl-[acyl-carrier-protein] dehydratase FabZ (153 aa).

His54 is a catalytic residue.

This sequence belongs to the thioester dehydratase family. FabZ subfamily.

It localises to the cytoplasm. The enzyme catalyses a (3R)-hydroxyacyl-[ACP] = a (2E)-enoyl-[ACP] + H2O. Functionally, involved in unsaturated fatty acids biosynthesis. Catalyzes the dehydration of short chain beta-hydroxyacyl-ACPs and long chain saturated and unsaturated beta-hydroxyacyl-ACPs. The polypeptide is 3-hydroxyacyl-[acyl-carrier-protein] dehydratase FabZ (Shewanella frigidimarina (strain NCIMB 400)).